The sequence spans 566 residues: Solute carrier family 22 member 16 (566 aa).

A helical transmembrane segment spans residues 20-40 (FASAFQTISCGIHYLASVFIA). N-linked (GlcNAc...) asparagine glycosylation is found at N52, N60, and N112. 5 consecutive transmembrane segments (helical) span residues 149–169 (LIQPIFMLGVLIGAVIFGDIA), 176–196 (PIIWITSTGQFLFGIAVAFTF), 201–221 (FVIVRFLLAMVSSGYYVVVFV), 237–257 (MHVHAFFAVGVMIVSLVGFLV), and 261–281 (WIYQIILSLTTLPFVLCCWML). N344 carries N-linked (GlcNAc...) asparagine glycosylation. Transmembrane regions (helical) follow at residues 351–371 (TITVWLIWFTGSLGYYVFALN), 381–401 (LNLFLTGAVEIPSYIVACLGM), 408–428 (NTLAPFLIISAVICGVIMLIP), 436–456 (IAMSMAGKFSIAVAFGLIYLY), 468–488 (LAVGSGSMMCRIGSVVAPFCV), and 493–513 (VWIFMPQMLVGIMAFLTGILT).

The protein belongs to the major facilitator (TC 2.A.1) superfamily. Organic cation transporter (TC 2.A.1.19) family.

The protein resides in the membrane. Its function is as follows. High affinity carnitine transporter. This is Solute carrier family 22 member 16 (slc22a16) from Xenopus laevis (African clawed frog).